Consider the following 127-residue polypeptide: Fluoride-specific ion channel FluC (127 aa).

4 helical membrane passes run 3 to 23 (LVFL…YFVG), 38 to 58 (LGTF…GHLA), 67 to 87 (FGIF…SYGL), and 102 to 122 (ISYV…GWFL). G77 and T80 together coordinate Na(+).

Belongs to the fluoride channel Fluc/FEX (TC 1.A.43) family.

The protein localises to the cell inner membrane. The enzyme catalyses fluoride(in) = fluoride(out). Na(+) is not transported, but it plays an essential structural role and its presence is essential for fluoride channel function. In terms of biological role, fluoride-specific ion channel. Important for reducing fluoride concentration in the cell, thus reducing its toxicity. This chain is Fluoride-specific ion channel FluC, found in Helicobacter acinonychis (strain Sheeba).